A 425-amino-acid chain; its full sequence is Phosphoribosylamine--glycine ligase (425 aa).

The region spanning 110 to 317 is the ATP-grasp domain; that stretch reads KEFMKRHGIP…LFDALLASVE (208 aa). Residue 137-198 coordinates ATP; the sequence is ETCPTFPQVI…EAFLSGQEAS (62 aa). Positions 287 and 289 each coordinate Mg(2+).

The protein belongs to the GARS family. Mg(2+) is required as a cofactor. Requires Mn(2+) as cofactor.

It carries out the reaction 5-phospho-beta-D-ribosylamine + glycine + ATP = N(1)-(5-phospho-beta-D-ribosyl)glycinamide + ADP + phosphate + H(+). It participates in purine metabolism; IMP biosynthesis via de novo pathway; N(1)-(5-phospho-D-ribosyl)glycinamide from 5-phospho-alpha-D-ribose 1-diphosphate: step 2/2. This chain is Phosphoribosylamine--glycine ligase, found in Chlorobaculum tepidum (strain ATCC 49652 / DSM 12025 / NBRC 103806 / TLS) (Chlorobium tepidum).